A 134-amino-acid chain; its full sequence is MSPLRPLLLALALASVPCAQGACPASADLKHSDGTRTCAKLYDKSDPYYENCCGGAELSLESGADLPYLPSNWANTASSLVVAPRCELTVWSRQGKAGKTHKFSAGTYPRLEEYRRGILGDWSNAISALYCRCS.

A signal peptide spans 1-21; that stretch reads MSPLRPLLLALALASVPCAQG.

Monomer and homooligomer; most probably hexameric. Interacts with GP2. Contains intrachain disulfide bonds.

The protein localises to the zymogen granule membrane. The protein resides in the zymogen granule lumen. Functionally, functions in exocytosis in pancreatic acinar cells regulating the fusion of zymogen granules with each other. May have a pore-forming activity on membranes and regulate exocytosis in other exocrine tissues. The sequence is that of Syncollin (SYCN) from Homo sapiens (Human).